Consider the following 222-residue polypeptide: 7-cyano-7-deazaguanine synthase (222 aa).

11–21 (FSGGQDSTTCL) contacts ATP. 4 residues coordinate Zn(2+): Cys187, Cys195, Cys198, and Cys201.

Belongs to the QueC family. Zn(2+) serves as cofactor.

The catalysed reaction is 7-carboxy-7-deazaguanine + NH4(+) + ATP = 7-cyano-7-deazaguanine + ADP + phosphate + H2O + H(+). Its pathway is purine metabolism; 7-cyano-7-deazaguanine biosynthesis. Catalyzes the ATP-dependent conversion of 7-carboxy-7-deazaguanine (CDG) to 7-cyano-7-deazaguanine (preQ(0)). In Actinobacillus pleuropneumoniae serotype 7 (strain AP76), this protein is 7-cyano-7-deazaguanine synthase.